We begin with the raw amino-acid sequence, 119 residues long: Large ribosomal subunit protein bL20 (119 aa).

The protein belongs to the bacterial ribosomal protein bL20 family.

In terms of biological role, binds directly to 23S ribosomal RNA and is necessary for the in vitro assembly process of the 50S ribosomal subunit. It is not involved in the protein synthesizing functions of that subunit. The sequence is that of Large ribosomal subunit protein bL20 from Dehalococcoides mccartyi (strain ATCC BAA-2100 / JCM 16839 / KCTC 5957 / BAV1).